Consider the following 229-residue polypeptide: Large ribosomal subunit protein uL1 (229 aa).

It belongs to the universal ribosomal protein uL1 family. As to quaternary structure, part of the 50S ribosomal subunit.

Its function is as follows. Binds directly to 23S rRNA. The L1 stalk is quite mobile in the ribosome, and is involved in E site tRNA release. Protein L1 is also a translational repressor protein, it controls the translation of the L11 operon by binding to its mRNA. This is Large ribosomal subunit protein uL1 from Leifsonia xyli subsp. xyli (strain CTCB07).